Here is a 594-residue protein sequence, read N- to C-terminus: Probable methylenetetrahydrofolate reductase (NADH) (594 aa).

The active-site Proton donor/acceptor is the E21. NAD(+)-binding positions include 21-26 and 52-53; these read EYFPPK and TW. Residues 52-53, H81, 111-113, Y153, 157-160, D175, and K182 each bind FAD; these read TW, RGD, and HPDA. Residue D113 coordinates substrate. The substrate site is built by Q193 and Y285.

Belongs to the methylenetetrahydrofolate reductase family. In terms of assembly, homodimer. Requires FAD as cofactor.

It catalyses the reaction (6S)-5-methyl-5,6,7,8-tetrahydrofolate + NAD(+) = (6R)-5,10-methylene-5,6,7,8-tetrahydrofolate + NADH + H(+). It participates in one-carbon metabolism; tetrahydrofolate interconversion. With respect to regulation, plant MTHFRs strongly prefer NADH over NADPH. Not inhibited by methionine or S-adenosylmethionine. In terms of biological role, the probable reversibility of the MTHFR reaction in plants suggests that they can metabolize the methyl group of 5,10-methylenetetrahydrofolate to serine, sugars and starch. This is Probable methylenetetrahydrofolate reductase (NADH) from Oryza sativa subsp. japonica (Rice).